The sequence spans 431 residues: Glutamate-1-semialdehyde 2,1-aminomutase (431 aa).

Position 269 is an N6-(pyridoxal phosphate)lysine (lysine 269).

Belongs to the class-III pyridoxal-phosphate-dependent aminotransferase family. HemL subfamily. As to quaternary structure, homodimer. Pyridoxal 5'-phosphate is required as a cofactor.

It is found in the cytoplasm. The enzyme catalyses (S)-4-amino-5-oxopentanoate = 5-aminolevulinate. It participates in porphyrin-containing compound metabolism; protoporphyrin-IX biosynthesis; 5-aminolevulinate from L-glutamyl-tRNA(Glu): step 2/2. The protein operates within porphyrin-containing compound metabolism; chlorophyll biosynthesis. In Chlorobaculum parvum (strain DSM 263 / NCIMB 8327) (Chlorobium vibrioforme subsp. thiosulfatophilum), this protein is Glutamate-1-semialdehyde 2,1-aminomutase.